Reading from the N-terminus, the 221-residue chain is NAD(P)H-hydrate epimerase (221 aa).

In terms of domain architecture, YjeF N-terminal spans 10–210 (MQQIDNYTIE…DVGMLIPDDF (201 aa)). 58-62 (NNGAD) is a (6S)-NADPHX binding site. 2 residues coordinate K(+): asparagine 59 and aspartate 120. Residues 124 to 130 (GVGLNNV) and aspartate 153 each bind (6S)-NADPHX. A K(+)-binding site is contributed by threonine 156.

The protein belongs to the NnrE/AIBP family. K(+) serves as cofactor.

The catalysed reaction is (6R)-NADHX = (6S)-NADHX. It carries out the reaction (6R)-NADPHX = (6S)-NADPHX. In terms of biological role, catalyzes the epimerization of the S- and R-forms of NAD(P)HX, a damaged form of NAD(P)H that is a result of enzymatic or heat-dependent hydration. This is a prerequisite for the S-specific NAD(P)H-hydrate dehydratase to allow the repair of both epimers of NAD(P)HX. The chain is NAD(P)H-hydrate epimerase from Leuconostoc mesenteroides subsp. mesenteroides (strain ATCC 8293 / DSM 20343 / BCRC 11652 / CCM 1803 / JCM 6124 / NCDO 523 / NBRC 100496 / NCIMB 8023 / NCTC 12954 / NRRL B-1118 / 37Y).